We begin with the raw amino-acid sequence, 413 residues long: Serine/threonine-protein phosphatase 7 (413 aa).

Cys-28 and Cys-67 form a disulfide bridge. Asp-84, His-86, Asp-113, and Asn-145 together coordinate Mn(2+). His-146 (proton donor) is an active-site residue. Residues His-197 and His-303 each coordinate Mn(2+). The segment at 391 to 413 (NVIDSDDEMDKSAMDTNNEQPNS) is disordered. Residues 404–413 (MDTNNEQPNS) are compositionally biased toward polar residues.

It belongs to the PPP phosphatase family. PP-7 subfamily. Monomer, homodimer, and heteromer. Interacts with calmodulin (CaM3 and CaM4) and HSFA1A/HSF1. The cofactor is Mn(2+). Expressed in leaves, and, to a lower extent, in stems and flowers.

It is found in the nucleus. The protein localises to the nucleoplasm. The catalysed reaction is O-phospho-L-seryl-[protein] + H2O = L-seryl-[protein] + phosphate. The enzyme catalyses O-phospho-L-threonyl-[protein] + H2O = L-threonyl-[protein] + phosphate. Inhibited by NaF and orthovanadate, as well as by divalent cations such as Ni(2+) and Zn(2+). Inhibited by polylysine with myelin basic protein as substrate, but activated by polylysine with pNPP as substrate. Reversibly regulated by redox agents. Inhibited by submillimolar Pi concentrations. Slightly repressed by calmodulin (CaM). Its function is as follows. Phosphatase active on para-nitrophenylphosphate (pNPP) and on various phosphoproteins such as myelin basic protein. Seems to act as a positive regulator of cryptochrome signaling involved in hypocotyl growth inhibition and cotyledon expansion under white and blue light conditions. Confers thermotolerance. Required for heat shock mediated-signaling pathway that leads to the expression of heat shock proteins (HSPs). In Arabidopsis thaliana (Mouse-ear cress), this protein is Serine/threonine-protein phosphatase 7 (PP7).